Consider the following 350-residue polypeptide: Cobalt-precorrin-5B C(1)-methyltransferase (350 aa).

Belongs to the CbiD family.

The catalysed reaction is Co-precorrin-5B + S-adenosyl-L-methionine = Co-precorrin-6A + S-adenosyl-L-homocysteine. It participates in cofactor biosynthesis; adenosylcobalamin biosynthesis; cob(II)yrinate a,c-diamide from sirohydrochlorin (anaerobic route): step 6/10. Its function is as follows. Catalyzes the methylation of C-1 in cobalt-precorrin-5B to form cobalt-precorrin-6A. The polypeptide is Cobalt-precorrin-5B C(1)-methyltransferase (Sulfurisphaera tokodaii (strain DSM 16993 / JCM 10545 / NBRC 100140 / 7) (Sulfolobus tokodaii)).